A 382-amino-acid polypeptide reads, in one-letter code: Galactokinase (382 aa).

34–37 (EHTD) contributes to the substrate binding site. Residue 124-130 (GAGLSSS) participates in ATP binding. Positions 130 and 162 each coordinate Mg(2+). The active-site Proton acceptor is Asp174. Residue Tyr223 coordinates substrate.

The protein belongs to the GHMP kinase family. GalK subfamily.

The protein resides in the cytoplasm. The catalysed reaction is alpha-D-galactose + ATP = alpha-D-galactose 1-phosphate + ADP + H(+). It functions in the pathway carbohydrate metabolism; galactose metabolism. In terms of biological role, catalyzes the transfer of the gamma-phosphate of ATP to D-galactose to form alpha-D-galactose-1-phosphate (Gal-1-P). The chain is Galactokinase from Salmonella schwarzengrund (strain CVM19633).